We begin with the raw amino-acid sequence, 78 residues long: UPF0349 protein GK2958 (78 aa).

The protein belongs to the UPF0349 family.

The protein is UPF0349 protein GK2958 of Geobacillus kaustophilus (strain HTA426).